The chain runs to 148 residues: Receptor activity-modifying protein 1 (148 aa).

The N-terminal stretch at 1–26 is a signal peptide; that stretch reads MAPGLRGLPRRGLWLLLAHHLFMVTA. Disulfide bonds link Cys27–Cys82, Cys40–Cys72, and Cys57–Cys104. Residues 27 to 118 lie on the Extracellular side of the membrane; the sequence is CRDPDYGTLI…RALRDPPNSI (92 aa). Residues 119–140 traverse the membrane as a helical segment; it reads LCPFIVLPITVTLLMTALVVWR. The Cytoplasmic portion of the chain corresponds to 141-148; sequence SKRTEGIV.

The protein belongs to the RAMP family. As to quaternary structure, heterodimer of CALCRL and RAMP1; the interaction induces allosteric modulation of CALCRL function and CGRP1/CALCA and CGRP2/CALCB ligand specificity. Heterodimer of CALCR and RAMP1; interaction forms the AMYR1 receptor complex for amylin/IAPP and CGRP1/CALCA ligands.

Its subcellular location is the cell membrane. Its function is as follows. Accessory protein that interacts with and modulates the function of G-protein coupled receptors including calcitonin gene-related peptide type 1 receptor (CALCRL) and calcitonin receptor (CALCR). Required for the transport of CALCRL to the plasma membrane. Together with CALCRL, form the receptor complex for the calcitonin gene-related peptides CGRP1/CALCA and CGRP2/CALCB. Together with CALCR, form the AMYR1 receptor complex for amylin/IAPP and CGRP1/CALCA. The sequence is that of Receptor activity-modifying protein 1 from Rattus norvegicus (Rat).